The following is a 318-amino-acid chain: MYLINLLAMIVPVLLAVAFLTLLERKVLGYMQLRKGPNIVGPYGLLQPIADAVKLFTKEPLQPLTSSPMLFIIAPTLALTLALTMWTPLPMPYPLMNMNLSMLFILALSSLAVYTIMWSGWASNSKYALIGALRAVAQTISYEVTLAIIILSLLLMNGSFTLLSMTTTQEYIWLLIPSWPLAMMWFISTLAETNRAPFDLTEGESELVSGFNVEYAGGPFALFFLAEYANIIMMNALTIILFLGAYHNSMVPELYTINFTIKTLLFTAFFLWIRASYPRFRYDQLMHLLWKNFLPLTLVMCMWHVALPIMLAGIPPQT.

8 helical membrane passes run 3-23, 69-89, 102-122, 144-164, 171-191, 222-242, 253-273, and 294-314; these read LINL…LTLL, MLFI…WTPL, MLFI…SGWA, VTLA…TLLS, YIWL…STLA, LFFL…IILF, ELYT…FLWI, and LPLT…LAGI.

The protein belongs to the complex I subunit 1 family. Core subunit of respiratory chain NADH dehydrogenase (Complex I) which is composed of 45 different subunits.

The protein resides in the mitochondrion inner membrane. It carries out the reaction a ubiquinone + NADH + 5 H(+)(in) = a ubiquinol + NAD(+) + 4 H(+)(out). Functionally, core subunit of the mitochondrial membrane respiratory chain NADH dehydrogenase (Complex I) which catalyzes electron transfer from NADH through the respiratory chain, using ubiquinone as an electron acceptor. Essential for the catalytic activity and assembly of complex I. The chain is NADH-ubiquinone oxidoreductase chain 1 (MT-ND1) from Murina suilla (Brown tube-nosed bat).